The primary structure comprises 178 residues: CDP-archaeol synthase (178 aa).

Helical transmembrane passes span Leu-3–Val-23, Phe-56–Tyr-76, Ile-91–Ile-111, Ala-123–Tyr-143, and Leu-149–Tyr-169.

The protein belongs to the CDP-archaeol synthase family. The cofactor is Mg(2+).

Its subcellular location is the cell membrane. The enzyme catalyses 2,3-bis-O-(geranylgeranyl)-sn-glycerol 1-phosphate + CTP + H(+) = CDP-2,3-bis-O-(geranylgeranyl)-sn-glycerol + diphosphate. It participates in membrane lipid metabolism; glycerophospholipid metabolism. Functionally, catalyzes the formation of CDP-2,3-bis-(O-geranylgeranyl)-sn-glycerol (CDP-archaeol) from 2,3-bis-(O-geranylgeranyl)-sn-glycerol 1-phosphate (DGGGP) and CTP. This reaction is the third ether-bond-formation step in the biosynthesis of archaeal membrane lipids. In Methanococcus maripaludis (strain C7 / ATCC BAA-1331), this protein is CDP-archaeol synthase.